The chain runs to 270 residues: ATP synthase subunit a (270 aa).

Transmembrane regions (helical) follow at residues 37-57, 98-118, 143-163, 208-228, and 239-259; these read NVHIDSLFFSVLTGLIFLGVF, IAPLALTIFCWVFLMNLMDLV, DVNITMAMALGVFALMIYYSI, LFGNMFAGEVVFILCAAMLPW, and AIFHILVILIQSFVFMMLTIV.

Belongs to the ATPase A chain family. In terms of assembly, F-type ATPases have 2 components, CF(1) - the catalytic core - and CF(0) - the membrane proton channel. CF(1) has five subunits: alpha(3), beta(3), gamma(1), delta(1), epsilon(1). CF(0) has three main subunits: a(1), b(2) and c(9-12). The alpha and beta chains form an alternating ring which encloses part of the gamma chain. CF(1) is attached to CF(0) by a central stalk formed by the gamma and epsilon chains, while a peripheral stalk is formed by the delta and b chains.

It is found in the cell inner membrane. In terms of biological role, key component of the proton channel; it plays a direct role in the translocation of protons across the membrane. The sequence is that of ATP synthase subunit a from Vibrio cholerae serotype O1 (strain ATCC 39315 / El Tor Inaba N16961).